We begin with the raw amino-acid sequence, 98 residues long: Integration host factor subunit alpha (98 aa).

Positions 49–71 are disordered; sequence FGNFDLRDKNQRPGRNPKTGEDI.

Belongs to the bacterial histone-like protein family. In terms of assembly, heterodimer of an alpha and a beta chain.

In terms of biological role, this protein is one of the two subunits of integration host factor, a specific DNA-binding protein that functions in genetic recombination as well as in transcriptional and translational control. This Shewanella oneidensis (strain ATCC 700550 / JCM 31522 / CIP 106686 / LMG 19005 / NCIMB 14063 / MR-1) protein is Integration host factor subunit alpha.